Consider the following 314-residue polypeptide: Formate-nitrite transporter (314 aa).

Residues 1–47 (MSKGKSKYVIDPISVKTACTSEESYIRCVEYGKGKAHYPNLSLLAKA) are Cytoplasmic-facing. The helical transmembrane segment at 48 to 68 (ILAGVFVGVCAHASGIAGGHF) threads the bilayer. Over 69–78 (YYHKLREYVG) the chain is Extracellular. The chain crosses the membrane as a helical span at residues 79–99 (ISMSAFVYGFTFPIAFLCIIA). Topologically, residues 100–128 (TGSDLFTGNTLAVTTALLQRKVSLLQYLR) are cytoplasmic. A helical transmembrane segment spans residues 129–149 (VMSISLFGNYLGAVSFAFFVS). Residues 150-185 (HLSGAYEKHTDVTKNHIFQFLNDIAEKKISHTFIQC) lie on the Extracellular side of the membrane. The helical transmembrane segment at 186-206 (ICLAIGCNIFVCLAVYFVLTI) threads the bilayer. Topologically, residues 207–211 (KDGSG) are cytoplasmic. Residues 212–232 (MVFSVFFAVYAFAIAGYEHII) form a helical membrane-spanning segment. Residues 233–257 (ANMYTLNLALMVEAKVTWSKVYFHN) lie on the Extracellular side of the membrane. Residues 258-278 (LLPTLIGNYIAGALVLACPLF) form a helical membrane-spanning segment. Topologically, residues 279–314 (YIYRNSYRDYERTRGDGSNCGLRSLSIEMQNGSNGN) are cytoplasmic.

Belongs to the FNT transporter (TC 1.A.16) family. Homopentamer.

Its subcellular location is the cell membrane. The protein localises to the vacuole membrane. It catalyses the reaction (S)-lactate(in) + H(+)(in) = (S)-lactate(out) + H(+)(out). The catalysed reaction is formate(in) + H(+)(in) = formate(out) + H(+)(out). The enzyme catalyses pyruvate(out) + H(+)(out) = pyruvate(in) + H(+)(in). It carries out the reaction acetate(out) + H(+)(out) = acetate(in) + H(+)(in). Inhibited by the Malaria Box compound MMV007839 and its derivatives BH296 and BH267.meta. Monocarboxylate-proton symporter that mediates the efflux of the waste product lactate in the intraerythrocytic parasites; active in acidic-to-neutral pH range. Transports L-lactate. The protein is Formate-nitrite transporter of Plasmodium knowlesi (strain H).